The chain runs to 220 residues: Ribosome maturation factor RimM (220 aa).

One can recognise a PRC barrel domain in the interval 143–220; it reads EGEFYWVDLI…RIVVDWGLDY (78 aa).

It belongs to the RimM family. In terms of assembly, binds ribosomal protein uS19.

It is found in the cytoplasm. An accessory protein needed during the final step in the assembly of 30S ribosomal subunit, possibly for assembly of the head region. Essential for efficient processing of 16S rRNA. May be needed both before and after RbfA during the maturation of 16S rRNA. It has affinity for free ribosomal 30S subunits but not for 70S ribosomes. The sequence is that of Ribosome maturation factor RimM from Cupriavidus metallidurans (strain ATCC 43123 / DSM 2839 / NBRC 102507 / CH34) (Ralstonia metallidurans).